Reading from the N-terminus, the 413-residue chain is Acetate kinase (413 aa).

Position 7 (N7) interacts with Mg(2+). K14 is an ATP binding site. R98 lines the substrate pocket. D157 acts as the Proton donor/acceptor in catalysis. ATP-binding positions include 216–220 (HIGNG), 291–293 (DLR), and 339–343 (GVGEN). E392 provides a ligand contact to Mg(2+).

It belongs to the acetokinase family. Homodimer. The cofactor is Mg(2+). It depends on Mn(2+) as a cofactor.

It localises to the cytoplasm. It catalyses the reaction acetate + ATP = acetyl phosphate + ADP. Its pathway is metabolic intermediate biosynthesis; acetyl-CoA biosynthesis; acetyl-CoA from acetate: step 1/2. Functionally, catalyzes the formation of acetyl phosphate from acetate and ATP. Can also catalyze the reverse reaction. The polypeptide is Acetate kinase (Synechocystis sp. (strain ATCC 27184 / PCC 6803 / Kazusa)).